Reading from the N-terminus, the 122-residue chain is Large ribosomal subunit protein bL12 (122 aa).

This sequence belongs to the bacterial ribosomal protein bL12 family. In terms of assembly, homodimer. Part of the ribosomal stalk of the 50S ribosomal subunit. Forms a multimeric L10(L12)X complex, where L10 forms an elongated spine to which 2 to 4 L12 dimers bind in a sequential fashion. Binds GTP-bound translation factors.

Forms part of the ribosomal stalk which helps the ribosome interact with GTP-bound translation factors. Is thus essential for accurate translation. This is Large ribosomal subunit protein bL12 from Stenotrophomonas maltophilia (strain R551-3).